The sequence spans 185 residues: Lysozyme g (185 aa).

Q1 bears the Pyrrolidone carboxylic acid mark. 2 disulfide bridges follow: C4-C60 and C18-C29. Active-site residues include E73 and D86.

It belongs to the glycosyl hydrolase 23 family.

Its subcellular location is the secreted. The enzyme catalyses Hydrolysis of (1-&gt;4)-beta-linkages between N-acetylmuramic acid and N-acetyl-D-glucosamine residues in a peptidoglycan and between N-acetyl-D-glucosamine residues in chitodextrins.. This is Lysozyme g from Casuarius casuarius (Southern cassowary).